The primary structure comprises 846 residues: Iron-sulfur cluster assembly SufBD family protein Mb1496 (846 aa).

Positions 1–20 (MTLTPEASKSVAQPPTQAPL) are disordered. Positions 388 to 528 (LAGYYLAEGH…LQSILARLGH (141 aa)) constitute a DOD-type homing endonuclease domain.

It belongs to the iron-sulfur cluster assembly SufBD family. This protein undergoes a protein self splicing that involves a post-translational excision of the intervening region (intein) followed by peptide ligation.

The polypeptide is Iron-sulfur cluster assembly SufBD family protein Mb1496 (Mycobacterium bovis (strain ATCC BAA-935 / AF2122/97)).